The sequence spans 103 residues: Isocitrate dehydrogenase [NAD] subunit beta, mitochondrial (103 aa).

Belongs to the isocitrate and isopropylmalate dehydrogenases family. As to quaternary structure, heterooligomer of subunits alpha (IDH3A), beta (IDH3B), and gamma (IDH3G) in the apparent ratio of 2:1:1. The heterodimer containing one IDH3A and one IDH3B subunit and the heterodimer containing one IDH3A and one IDH3G subunit assemble into a heterotetramer (which contains two subunits of IDH3A, one of IDH3B and one of IDH3G) and further into the heterooctamer.

It is found in the mitochondrion. With respect to regulation, the heterotetramer and the heterodimer composed of IDH3A and IDH3G subunits can be allosterically activated by citrate (CIT) or/and ADP, and the two activators can act independently or synergistically. The heterodimer composed of IDH3A and IDH3B subunits cannot be allosterically regulated and the allosteric regulation of the heterotetramer is through the IDH3G subunit and not the IDH3B subunit. The IDH3G subunit contains the allosteric site which consists of a CIT-binding site and an ADP-binding site, and the binding of CIT and ADP causes conformational changes at the allosteric site which are transmitted to the active site in the catalytic subunit (IDH3A) through a cascade of conformational changes at the heterodimer interface, leading to stabilization of the isocitrate-binding at the active site and thus activation of the enzyme. ATP can activate the heterotetramer and the heterodimer composed of IDH3A and IDH3G subunits at low concentrations but inhibits their activities at high concentrations, whereas ATP exhibits only inhibitory effect on the heterodimer composed of IDH3A and IDH3B subunits. Functionally, plays a structural role to facilitate the assembly and ensure the full activity of the enzyme catalyzing the decarboxylation of isocitrate (ICT) into alpha-ketoglutarate. The heterodimer composed of the alpha (IDH3A) and beta (IDH3B) subunits and the heterodimer composed of the alpha (IDH3A) and gamma (IDH3G) subunits, have considerable basal activity but the full activity of the heterotetramer (containing two subunits of IDH3A, one of IDH3B and one of IDH3G) requires the assembly and cooperative function of both heterodimers. This is Isocitrate dehydrogenase [NAD] subunit beta, mitochondrial (IDH3B) from Sus scrofa (Pig).